We begin with the raw amino-acid sequence, 693 residues long: DNA ligase (693 aa).

Residues 43 to 47, 92 to 93, and glutamate 123 each bind NAD(+); these read DEEYD and SL. Lysine 125 serves as the catalytic N6-AMP-lysine intermediate. Positions 146, 180, 296, and 320 each coordinate NAD(+). Residues cysteine 414, cysteine 417, cysteine 433, and cysteine 438 each coordinate Zn(2+). The BRCT domain occupies 595 to 684; sequence VKYDVLKGLT…AKLKGYNFDE (90 aa).

The protein belongs to the NAD-dependent DNA ligase family. LigA subfamily. The cofactor is Mg(2+). Mn(2+) serves as cofactor.

The enzyme catalyses NAD(+) + (deoxyribonucleotide)n-3'-hydroxyl + 5'-phospho-(deoxyribonucleotide)m = (deoxyribonucleotide)n+m + AMP + beta-nicotinamide D-nucleotide.. Functionally, DNA ligase that catalyzes the formation of phosphodiester linkages between 5'-phosphoryl and 3'-hydroxyl groups in double-stranded DNA using NAD as a coenzyme and as the energy source for the reaction. It is essential for DNA replication and repair of damaged DNA. The polypeptide is DNA ligase (Thermotoga neapolitana (strain ATCC 49049 / DSM 4359 / NBRC 107923 / NS-E)).